Reading from the N-terminus, the 346-residue chain is tRNA N6-adenosine threonylcarbamoyltransferase (346 aa).

Residues H111 and H115 each contribute to the Fe cation site. Residues 134 to 138 (LVSGG), D167, G180, and N277 each bind substrate. D305 contributes to the Fe cation binding site.

It belongs to the KAE1 / TsaD family. The cofactor is Fe(2+).

Its subcellular location is the cytoplasm. The catalysed reaction is L-threonylcarbamoyladenylate + adenosine(37) in tRNA = N(6)-L-threonylcarbamoyladenosine(37) in tRNA + AMP + H(+). In terms of biological role, required for the formation of a threonylcarbamoyl group on adenosine at position 37 (t(6)A37) in tRNAs that read codons beginning with adenine. Is involved in the transfer of the threonylcarbamoyl moiety of threonylcarbamoyl-AMP (TC-AMP) to the N6 group of A37, together with TsaE and TsaB. TsaD likely plays a direct catalytic role in this reaction. The chain is tRNA N6-adenosine threonylcarbamoyltransferase from Bordetella bronchiseptica (strain ATCC BAA-588 / NCTC 13252 / RB50) (Alcaligenes bronchisepticus).